A 120-amino-acid polypeptide reads, in one-letter code: Ribonuclease P protein component (120 aa).

It belongs to the RnpA family. Consists of a catalytic RNA component (M1 or rnpB) and a protein subunit.

The catalysed reaction is Endonucleolytic cleavage of RNA, removing 5'-extranucleotides from tRNA precursor.. In terms of biological role, RNaseP catalyzes the removal of the 5'-leader sequence from pre-tRNA to produce the mature 5'-terminus. It can also cleave other RNA substrates such as 4.5S RNA. The protein component plays an auxiliary but essential role in vivo by binding to the 5'-leader sequence and broadening the substrate specificity of the ribozyme. The protein is Ribonuclease P protein component of Chelativorans sp. (strain BNC1).